A 372-amino-acid polypeptide reads, in one-letter code: MELQEVLRMNGGEGDTSYAKNSAYNQLVLAKVKPVLEQCVRELLRANLPNINKCIKVADLGCASGPNTLLTVRDIVQSIDKVGQEKKNELERPTIQIFLNDLFPNDFNSVFKLLPSFYRKLEKENGRKIGSCLIGAMPGSFYSRLFPEESMHFLHSCYCLQWLSQVPSGLVTELGISTNKGSIYSSKASRLPVQKAYLDQFTKDFTTFLRIHSEELFSHGRMLLTCICKGVELDARNAIDLLEMAINDLVVEGHLEEEKLDSFNLPVYIPSAEEVKCIVEEEGSFEILYLETFKVLYDAGFSIDDEHIKAEYVASSVRAVYEPILASHFGEAIIPDIFHRFAKHAAKVLPLGKGFYNNLIISLAKKPEKSDV.

Residue tyrosine 18 participates in S-adenosyl-L-homocysteine binding. Xanthosine-binding residues include asparagine 21 and asparagine 25. Residues cysteine 62, asparagine 67, aspartate 101, leucine 102, serine 140, phenylalanine 141, and cysteine 157 each coordinate S-adenosyl-L-homocysteine. Residue tyrosine 158 coordinates xanthosine. An S-adenosyl-L-homocysteine-binding site is contributed by cysteine 159. Residues glutamine 161 and tryptophan 162 each contribute to the xanthosine site. Mg(2+) contacts are provided by asparagine 179, aspartate 261, phenylalanine 263, and asparagine 264. Residues serine 316, tyrosine 321, and tyrosine 356 each coordinate xanthosine.

It belongs to the methyltransferase superfamily. Type-7 methyltransferase family. Mg(2+) serves as cofactor. Expressed in stems, young leaves, floral buds, developing endosperm and immature fruits (grains). Detected in roots and old leaves, but not in mature fruits.

It carries out the reaction xanthosine + S-adenosyl-L-methionine = 7-methylxanthosine + S-adenosyl-L-homocysteine. It functions in the pathway alkaloid biosynthesis. Involved in the biosynthesis of caffeine. Specific for xanthosine and could not use xanthosine 5'-monophosphate (XMP) as substrate. Catalyzes the 7-N-methylation activity of xanthosine, but does not have 1-N- or 3-N-methylation activity. The sequence is that of 7-methylxanthosine synthase 1 from Coffea arabica (Arabian coffee).